A 428-amino-acid chain; its full sequence is Trigger factor (428 aa).

The region spanning 166–250 is the PPIase FKBP-type domain; sequence GDIVTFDFKG…IKNIKEKILP (85 aa).

This sequence belongs to the FKBP-type PPIase family. Tig subfamily.

The protein localises to the cytoplasm. It carries out the reaction [protein]-peptidylproline (omega=180) = [protein]-peptidylproline (omega=0). Its function is as follows. Involved in protein export. Acts as a chaperone by maintaining the newly synthesized protein in an open conformation. Functions as a peptidyl-prolyl cis-trans isomerase. This is Trigger factor from Mycoplasma capricolum subsp. capricolum (strain California kid / ATCC 27343 / NCTC 10154).